The sequence spans 372 residues: Ligninase LG6 (372 aa).

An N-terminal signal peptide occupies residues 1–21 (MALKQLAAAVALALSIQAAQG). The propeptide occupies 22–28 (AAVKEKR). 2 cysteine pairs are disulfide-bonded: C31–C43 and C62–C148. Residue H75 is the Proton acceptor of the active site. The Ca(2+) site is built by D76, G94, D96, and S98. Residue H204 participates in heme b binding. Ca(2+) is bound by residues S205, D222, T224, V227, and D229. A disulfide bridge connects residues C277 and C345. N-linked (GlcNAc...) asparagine glycosylation is present at N285. Low complexity predominate over residues 352-361 (TLTTLPGPET). The disordered stretch occupies residues 352–372 (TLTTLPGPETSVQRIQPPPGA).

The protein belongs to the peroxidase family. Ligninase subfamily. It depends on heme b as a cofactor. Requires Ca(2+) as cofactor.

The enzyme catalyses 1-(3,4-dimethoxyphenyl)-2-(2-methoxyphenoxy)propane-1,3-diol + H2O2 = 3,4-dimethoxybenzaldehyde + guaiacol + glycolaldehyde + H2O. The catalysed reaction is 2 (3,4-dimethoxyphenyl)methanol + H2O2 = 2 (3,4-dimethoxyphenyl)methanol radical + 2 H2O. The protein operates within secondary metabolite metabolism; lignin degradation. Functionally, depolymerization of lignin. Catalyzes the C(alpha)-C(beta) cleavage of the propyl side chains of lignin. This Phanerodontia chrysosporium (White-rot fungus) protein is Ligninase LG6 (GLG6).